We begin with the raw amino-acid sequence, 273 residues long: Urease accessory protein UreD (273 aa).

The protein belongs to the UreD family. UreD, UreF and UreG form a complex that acts as a GTP-hydrolysis-dependent molecular chaperone, activating the urease apoprotein by helping to assemble the nickel containing metallocenter of UreC. The UreE protein probably delivers the nickel.

The protein localises to the cytoplasm. Its function is as follows. Required for maturation of urease via the functional incorporation of the urease nickel metallocenter. The polypeptide is Urease accessory protein UreD (Rhizobium rhizogenes (strain K84 / ATCC BAA-868) (Agrobacterium radiobacter)).